The following is a 370-amino-acid chain: MLLASTTSAVPRTLSPPTPAGNGSRELLDTRDPLLVQAELALLSTVFVAVALSNGLVLGALARRVRRGRWAPMHVFIGHLCLADLAVALFQVLPQLAWDATDRFRGPDALCRAVKYLQMVGMYASSYMILAMTLDRHRAICRPMLAYRHGGGARWNRPVLVAWAFSLILSLPQLFIFAQRDVGNGSGVLDCWAHFAEPWGLRAYVTWIALMVFVAPALGIAACQVLIFREIHSSLVPGPAERAGGCRGGHRTGSPSEGARVSAAMAKTVRMTLVIVIVYVLCWAPFFLVQLWAAWDPQAPLEGAPFVLLMLLASLNSCTNPWIYAFFSSSVSSELRSLFCWARSRAPPSLGPQEESCATASSFLAKDTSS.

Residues 1–10 (MLLASTTSAV) are compositionally biased toward polar residues. Positions 1–26 (MLLASTTSAVPRTLSPPTPAGNGSRE) are disordered. Residues 1-37 (MLLASTTSAVPRTLSPPTPAGNGSRELLDTRDPLLVQ) lie on the Extracellular side of the membrane. An N-linked (GlcNAc...) asparagine glycan is attached at Asn22. The helical transmembrane segment at 38–62 (AELALLSTVFVAVALSNGLVLGALA) threads the bilayer. At 63 to 76 (RRVRRGRWAPMHVF) the chain is on the cytoplasmic side. The helical transmembrane segment at 77–97 (IGHLCLADLAVALFQVLPQLA) threads the bilayer. Topologically, residues 98–112 (WDATDRFRGPDALCR) are extracellular. The chain crosses the membrane as a helical span at residues 113 to 134 (AVKYLQMVGMYASSYMILAMTL). At 135-158 (DRHRAICRPMLAYRHGGGARWNRP) the chain is on the cytoplasmic side. Residues 159-179 (VLVAWAFSLILSLPQLFIFAQ) form a helical membrane-spanning segment. The Extracellular segment spans residues 180-199 (RDVGNGSGVLDCWAHFAEPW). Residues 200-219 (GLRAYVTWIALMVFVAPALG) form a helical membrane-spanning segment. The Cytoplasmic segment spans residues 220–270 (IAACQVLIFREIHSSLVPGPAERAGGCRGGHRTGSPSEGARVSAAMAKTVR). A helical transmembrane segment spans residues 271–292 (MTLVIVIVYVLCWAPFFLVQLW). Topologically, residues 293–307 (AAWDPQAPLEGAPFV) are extracellular. A helical transmembrane segment spans residues 308-327 (LLMLLASLNSCTNPWIYAFF). Over 328 to 370 (SSSVSSELRSLFCWARSRAPPSLGPQEESCATASSFLAKDTSS) the chain is Cytoplasmic. Residue Cys340 is the site of S-palmitoyl cysteine attachment.

Belongs to the G-protein coupled receptor 1 family. Vasopressin/oxytocin receptor subfamily. As to quaternary structure, interacts with ARRDC4. Identified in a complex containing at least ARRDC4, V2R and HGS. Interacts with TMEM147.

It localises to the cell membrane. Receptor for arginine vasopressin. The activity of this receptor is mediated by G proteins which activate adenylate cyclase. Involved in renal water reabsorption. In Canis lupus familiaris (Dog), this protein is Vasopressin V2 receptor (AVPR2).